The sequence spans 59 residues: UPF0434 protein RHOS4_00640 (59 aa).

It belongs to the UPF0434 family.

This Cereibacter sphaeroides (strain ATCC 17023 / DSM 158 / JCM 6121 / CCUG 31486 / LMG 2827 / NBRC 12203 / NCIMB 8253 / ATH 2.4.1.) (Rhodobacter sphaeroides) protein is UPF0434 protein RHOS4_00640.